Here is a 279-residue protein sequence, read N- to C-terminus: Dermonecrotic toxin LbSicTox-alphaIB1a (279 aa).

Residue His11 is part of the active site. Mg(2+)-binding residues include Glu31 and Asp33. His47 (nucleophile) is an active-site residue. 2 disulfide bridges follow: Cys51-Cys57 and Cys53-Cys196. Mg(2+) is bound at residue Asp91.

Belongs to the arthropod phospholipase D family. Class II subfamily. Class IIa sub-subfamily. The cofactor is Mg(2+). Expressed by the venom gland.

It is found in the secreted. The enzyme catalyses an N-(acyl)-sphingosylphosphocholine = an N-(acyl)-sphingosyl-1,3-cyclic phosphate + choline. It catalyses the reaction an N-(acyl)-sphingosylphosphoethanolamine = an N-(acyl)-sphingosyl-1,3-cyclic phosphate + ethanolamine. The catalysed reaction is a 1-acyl-sn-glycero-3-phosphocholine = a 1-acyl-sn-glycero-2,3-cyclic phosphate + choline. It carries out the reaction a 1-acyl-sn-glycero-3-phosphoethanolamine = a 1-acyl-sn-glycero-2,3-cyclic phosphate + ethanolamine. Its function is as follows. Dermonecrotic toxins cleave the phosphodiester linkage between the phosphate and headgroup of certain phospholipids (sphingolipid and lysolipid substrates), forming an alcohol (often choline) and a cyclic phosphate. This toxin acts on sphingomyelin (SM) with high activity (about 30.5-31.5 U/mg). It may also act on ceramide phosphoethanolamine (CPE), lysophosphatidylcholine (LPC) and lysophosphatidylethanolamine (LPE), but not on lysophosphatidylserine (LPS), and lysophosphatidylglycerol (LPG). It acts by transphosphatidylation, releasing exclusively cyclic phosphate products as second products. Induces dermonecrosis, hemolysis, increased vascular permeability, edema, inflammatory response, and platelet aggregation. Is lethal to mice. The protein is Dermonecrotic toxin LbSicTox-alphaIB1a of Loxosceles boneti (North American fiddleback spider).